We begin with the raw amino-acid sequence, 289 residues long: ATP synthase gamma chain (289 aa).

The protein belongs to the ATPase gamma chain family. F-type ATPases have 2 components, CF(1) - the catalytic core - and CF(0) - the membrane proton channel. CF(1) has five subunits: alpha(3), beta(3), gamma(1), delta(1), epsilon(1). CF(0) has three main subunits: a, b and c.

It is found in the cell inner membrane. Functionally, produces ATP from ADP in the presence of a proton gradient across the membrane. The gamma chain is believed to be important in regulating ATPase activity and the flow of protons through the CF(0) complex. The sequence is that of ATP synthase gamma chain from Cereibacter sphaeroides (strain ATCC 17029 / ATH 2.4.9) (Rhodobacter sphaeroides).